The chain runs to 141 residues: Nucleoside triphosphatase NudI (141 aa).

The Nudix hydrolase domain maps to 1–141 (MRQRTIVCPL…RHTLALKGLL (141 aa)). A Nudix box motif is present at residues 38–59 (GGVEPGERIEEALRREVREELG).

It belongs to the Nudix hydrolase family. NudI subfamily. Monomer. The cofactor is Mg(2+).

The enzyme catalyses a ribonucleoside 5'-triphosphate + H2O = a ribonucleoside 5'-phosphate + diphosphate + H(+). It catalyses the reaction a 2'-deoxyribonucleoside 5'-triphosphate + H2O = a 2'-deoxyribonucleoside 5'-phosphate + diphosphate + H(+). It carries out the reaction dUTP + H2O = dUMP + diphosphate + H(+). The catalysed reaction is dTTP + H2O = dTMP + diphosphate + H(+). The enzyme catalyses dCTP + H2O = dCMP + diphosphate + H(+). Catalyzes the hydrolysis of nucleoside triphosphates, with a preference for pyrimidine deoxynucleoside triphosphates (dUTP, dTTP and dCTP). The polypeptide is Nucleoside triphosphatase NudI (Salmonella schwarzengrund (strain CVM19633)).